Consider the following 365-residue polypeptide: tRNA (guanine(6)-N2)-methyltransferase (365 aa).

In terms of domain architecture, THUMP spans N69–T182. Residues H198–L202, S228–T230, E248, D276–A277, and N293 contribute to the S-adenosyl-L-methionine site.

It belongs to the methyltransferase superfamily. Monomer in solution.

It is found in the cytoplasm. The enzyme catalyses guanosine(6) in tRNA + S-adenosyl-L-methionine = N(2)-methylguanosine(6) in tRNA + S-adenosyl-L-homocysteine + H(+). Functionally, S-adenosyl-L-methionine-dependent methyltransferase that catalyzes the methylation of the guanosine nucleotide at position 6 (m2G6) in tRNA(Phe). This is tRNA (guanine(6)-N2)-methyltransferase from Pyrococcus furiosus (strain ATCC 43587 / DSM 3638 / JCM 8422 / Vc1).